The primary structure comprises 451 residues: MRECISIHIGQAGIQVGNACWELYCLEHGIQADGQMPGDKTIGGGDDAFNTFFSETGAGKHVPRAVFVDLEPTVIDEVRTGTYRQLFHPEQLISGKEDAANNFARGHYTIGKEIVDLCLDRIRKLADNCTGLQGFLVFNAVGGGTGSGLGSLLLERLSVDYGKKSKLGFTVYPSPQVSTSVVEPYNSVLSTHSLLEHTDVAILLDNEAIYDICRRSLDIERPTYTNLNRLVSQVISSLTASLRFDGALNVDVNEFQTNLVPYPRIHFMLSSYAPVISAEKAYHEQLSVAEITNSAFEPSSMMAKCDPRHGKYMACCLMYRGDVVPKDVNAAVATIKTKRTIQFVDWCPTGFKCGINYQPPSVVPGGDLAKVQRAVCMISNSTSVVEVFSRIDHKFDLMYAKRAFVHWYVGEGMEEGEFSEAREDLAALEKDYEEVGAEFDEGEEGDDGDEY.

A GTP-binding site is contributed by Gln11. Position 40 is an N6-acetyllysine (Lys40). Glu71, Gly144, Thr145, Thr179, Asn206, and Asn228 together coordinate GTP. Residue Glu71 participates in Mg(2+) binding. The active site involves Glu254.

The protein belongs to the tubulin family. As to quaternary structure, dimer of alpha and beta chains. A typical microtubule is a hollow water-filled tube with an outer diameter of 25 nm and an inner diameter of 15 nM. Alpha-beta heterodimers associate head-to-tail to form protofilaments running lengthwise along the microtubule wall with the beta-tubulin subunit facing the microtubule plus end conferring a structural polarity. Microtubules usually have 13 protofilaments but different protofilament numbers can be found in some organisms and specialized cells. Mg(2+) is required as a cofactor. In terms of processing, undergoes a tyrosination/detyrosination cycle, the cyclic removal and re-addition of a C-terminal tyrosine residue by the enzymes tubulin tyrosine carboxypeptidase (TTCP) and tubulin tyrosine ligase (TTL), respectively. Post-translationally, acetylation of alpha chains at Lys-40 stabilizes microtubules and affects affinity and processivity of microtubule motors. This modification has a role in multiple cellular functions, ranging from cell motility, cell cycle progression or cell differentiation to intracellular trafficking and signaling.

The protein localises to the cytoplasm. The protein resides in the cytoskeleton. It catalyses the reaction GTP + H2O = GDP + phosphate + H(+). Tubulin is the major constituent of microtubules, a cylinder consisting of laterally associated linear protofilaments composed of alpha- and beta-tubulin heterodimers. Microtubules grow by the addition of GTP-tubulin dimers to the microtubule end, where a stabilizing cap forms. Below the cap, tubulin dimers are in GDP-bound state, owing to GTPase activity of alpha-tubulin. The chain is Tubulin alpha-2 chain (TUBA2) from Zea mays (Maize).